The primary structure comprises 283 residues: Phosphatidylglycerol--prolipoprotein diacylglyceryl transferase (283 aa).

A run of 7 helical transmembrane segments spans residues 21 to 41 (LAVR…LWLA), 60 to 80 (LLFA…VLFY), 95 to 115 (VWTG…AMLW), 124 to 144 (FFTI…AGRL), 176 to 196 (SQLY…NWFI), 203 to 223 (GAVS…VEYV), and 239 to 259 (MGQI…LWAF). An a 1,2-diacyl-sn-glycero-3-phospho-(1'-sn-glycerol)-binding site is contributed by Arg-143.

It belongs to the Lgt family.

Its subcellular location is the cell inner membrane. It catalyses the reaction L-cysteinyl-[prolipoprotein] + a 1,2-diacyl-sn-glycero-3-phospho-(1'-sn-glycerol) = an S-1,2-diacyl-sn-glyceryl-L-cysteinyl-[prolipoprotein] + sn-glycerol 1-phosphate + H(+). The protein operates within protein modification; lipoprotein biosynthesis (diacylglyceryl transfer). Its function is as follows. Catalyzes the transfer of the diacylglyceryl group from phosphatidylglycerol to the sulfhydryl group of the N-terminal cysteine of a prolipoprotein, the first step in the formation of mature lipoproteins. The polypeptide is Phosphatidylglycerol--prolipoprotein diacylglyceryl transferase (Aliivibrio fischeri (strain MJ11) (Vibrio fischeri)).